The sequence spans 449 residues: Tubulin alpha-B chain (449 aa).

Glutamine 11, glutamate 71, serine 140, glycine 144, threonine 145, threonine 179, asparagine 206, and asparagine 228 together coordinate GTP. Glutamate 71 serves as a coordination point for Mg(2+). Residue glutamate 254 is part of the active site.

Belongs to the tubulin family. Dimer of alpha and beta chains. A typical microtubule is a hollow water-filled tube with an outer diameter of 25 nm and an inner diameter of 15 nM. Alpha-beta heterodimers associate head-to-tail to form protofilaments running lengthwise along the microtubule wall with the beta-tubulin subunit facing the microtubule plus end conferring a structural polarity. Microtubules usually have 13 protofilaments but different protofilament numbers can be found in some organisms and specialized cells. It depends on Mg(2+) as a cofactor.

It is found in the cytoplasm. The protein resides in the cytoskeleton. It carries out the reaction GTP + H2O = GDP + phosphate + H(+). In terms of biological role, tubulin is the major constituent of microtubules, a cylinder consisting of laterally associated linear protofilaments composed of alpha- and beta-tubulin heterodimers. Microtubules grow by the addition of GTP-tubulin dimers to the microtubule end, where a stabilizing cap forms. Below the cap, tubulin dimers are in GDP-bound state, owing to GTPase activity of alpha-tubulin. In Neurospora crassa (strain ATCC 24698 / 74-OR23-1A / CBS 708.71 / DSM 1257 / FGSC 987), this protein is Tubulin alpha-B chain (tba-2).